Reading from the N-terminus, the 550-residue chain is GMP synthase [glutamine-hydrolyzing] (550 aa).

The 194-residue stretch at Arg39 to Leu232 folds into the Glutamine amidotransferase type-1 domain. Cys116 (nucleophile) is an active-site residue. Active-site residues include His206 and Glu208. One can recognise a GMPS ATP-PPase domain in the interval Trp233 to Arg425. Ser260–Ser266 contributes to the ATP binding site.

Homodimer.

It catalyses the reaction XMP + L-glutamine + ATP + H2O = GMP + L-glutamate + AMP + diphosphate + 2 H(+). It participates in purine metabolism; GMP biosynthesis; GMP from XMP (L-Gln route): step 1/1. Its function is as follows. Catalyzes the synthesis of GMP from XMP. The chain is GMP synthase [glutamine-hydrolyzing] from Acinetobacter baylyi (strain ATCC 33305 / BD413 / ADP1).